The following is a 623-amino-acid chain: Keratin, type I cytoskeletal 9 (623 aa).

A compositionally biased stretch (low complexity) spans 1–13 (MSCRQFSSSYLSR). Residues 1–25 (MSCRQFSSSYLSRSGGGGGGGLGSG) form a disordered region. The tract at residues 1 to 152 (MSCRQFSSSY…GGDGGILTAN (152 aa)) is head. Residues S14 and S57 each carry the phosphoserine modification. Gly residues predominate over residues 14–25 (SGGGGGGGLGSG). A coil 1A region spans residues 153–188 (EKSTMQELNSRLASYLDKVQALEEANNDLENKIQDW). In terms of domain architecture, IF rod spans 153-465 (EKSTMQELNS…NLLEGGQEDF (313 aa)). The segment at 189–207 (YDKKGPAAIQKNYSPYYNT) is linker 1. Residues 208-299 (IDDLKDQIVD…KNHKEEMSQL (92 aa)) form a coil 1B region. A linker 12 region spans residues 300–322 (TGQNSGDVNVEINVAPGKDLTKT). The tract at residues 323–461 (LNDMRQEYEQ…ETYHNLLEGG (139 aa)) is coil 2. 2 disordered regions span residues 462–496 (QEDF…SGGS) and 534–623 (YGGG…SSHS). Residues 462–623 (QEDFESSGAG…GGGSGKSSHS (162 aa)) form a tail region. The span at 471–496 (GKIGLGGRGGSGGSYGRGSRGGSGGS) shows a compositional bias: gly residues.

Belongs to the intermediate filament family. Heterotetramer of two type I and two type II keratins. As to expression, expressed in the terminally differentiated epidermis of palms and soles.

May serve an important special function either in the mature palmar and plantar skin tissue or in the morphogenetic program of the formation of these tissues. Plays a role in keratin filament assembly. In Homo sapiens (Human), this protein is Keratin, type I cytoskeletal 9 (KRT9).